Consider the following 225-residue polypeptide: UPF0758 protein NMCC_1157 (225 aa).

Positions 102-224 (VLSDPDTVAD…VRSFRQLGLM (123 aa)) constitute an MPN domain. The Zn(2+) site is built by H173, H175, and D186. Positions 173-186 (HNHPGGSPEPSQED) match the JAMM motif motif.

It belongs to the UPF0758 family.

This is UPF0758 protein NMCC_1157 from Neisseria meningitidis serogroup C (strain 053442).